Here is a 1610-residue protein sequence, read N- to C-terminus: Adenylate cyclase type 10 (1610 aa).

2 consecutive Guanylate cyclase domains span residues 42 to 179 (VLMF…RLAQ) and 293 to 418 (TIVF…ARMM). The Mg(2+) site is built by Asp47 and Ile48. 47–52 (DISGFT) provides a ligand contact to ATP. Lys95 serves as a coordination point for hydrogencarbonate. Asp99 contributes to the Mg(2+) binding site. Residues Asp99 and Lys144 each coordinate ATP. Hydrogencarbonate contacts are provided by Val167, Arg176, and Met337. Residues Val406 and 412-416 (NLAAR) each bind ATP.

Belongs to the adenylyl cyclase class-4/guanylyl cyclase family. Mg(2+) is required as a cofactor. Requires Mn(2+) as cofactor. Cleavage may occur to generate the active 48 kDa form. In terms of tissue distribution, detected in airway epithelial cells and testis (at protein level). Weakly expressed in multiple tissues. Expressed in brain, heart, kidney, liver, lung, pancreas, peripheral blood leukocytes, placenta, skeletal muscle, stomach, thymus, airway epithelial cells, duodenum, jejunum and ileum. Very low level of expression in bone.

It is found in the cell membrane. Its subcellular location is the cytoplasm. The protein resides in the cytoskeleton. The protein localises to the perinuclear region. It localises to the nucleus. It is found in the cell projection. Its subcellular location is the cilium. The protein resides in the mitochondrion. It catalyses the reaction ATP = 3',5'-cyclic AMP + diphosphate. Its activity is regulated as follows. Activated by manganese or magnesium ions. In the presence of magnesium ions, the enzyme is activated by bicarbonate. In the presence of manganese ions, the enzyme is inhibited by bicarbonate. In the absence of magnesium and bicarbonate, the enzyme is weakly activated by calcium. Calcium mildly increases the enzyme activity, also in the presence of magnesium ions. Its function is as follows. Catalyzes the formation of the signaling molecule cAMP. May function as sensor that mediates responses to changes in cellular bicarbonate and CO(2) levels. Has a critical role in mammalian spermatogenesis by producing the cAMP which regulates cAMP-responsive nuclear factors indispensable for sperm maturation in the epididymis. Induces capacitation, the maturational process that sperm undergo prior to fertilization. Involved in ciliary beat regulation. This Homo sapiens (Human) protein is Adenylate cyclase type 10 (ADCY10).